Reading from the N-terminus, the 235-residue chain is Cytidylate kinase (235 aa).

16–24 (GPAASGKST) provides a ligand contact to ATP.

It belongs to the cytidylate kinase family. Type 1 subfamily.

The protein localises to the cytoplasm. It carries out the reaction CMP + ATP = CDP + ADP. The enzyme catalyses dCMP + ATP = dCDP + ADP. The chain is Cytidylate kinase from Chloroherpeton thalassium (strain ATCC 35110 / GB-78).